The chain runs to 140 residues: Small ribosomal subunit protein uS19 (140 aa).

The disordered stretch occupies residues 55 to 74 (LAEARESGTEETANNPIRTH).

This sequence belongs to the universal ribosomal protein uS19 family.

Its function is as follows. Protein S19 forms a complex with S13 that binds strongly to the 16S ribosomal RNA. This is Small ribosomal subunit protein uS19 from Halobacterium salinarum (strain ATCC 29341 / DSM 671 / R1).